Consider the following 130-residue polypeptide: Small ribosomal subunit protein uS8A (130 aa).

This sequence belongs to the universal ribosomal protein uS8 family. As to quaternary structure, component of the small ribosomal subunit (SSU). Mature yeast ribosomes consist of a small (40S) and a large (60S) subunit. The 40S small subunit contains 1 molecule of ribosomal RNA (18S rRNA) and at least 33 different proteins. The large 60S subunit contains 3 rRNA molecules (25S, 5.8S and 5S rRNA) and at least 46 different proteins.

The protein resides in the cytoplasm. It localises to the nucleus. In terms of biological role, component of the ribosome, a large ribonucleoprotein complex responsible for the synthesis of proteins in the cell. The small ribosomal subunit (SSU) binds messenger RNAs (mRNAs) and translates the encoded message by selecting cognate aminoacyl-transfer RNA (tRNA) molecules. The large subunit (LSU) contains the ribosomal catalytic site termed the peptidyl transferase center (PTC), which catalyzes the formation of peptide bonds, thereby polymerizing the amino acids delivered by tRNAs into a polypeptide chain. The nascent polypeptides leave the ribosome through a tunnel in the LSU and interact with protein factors that function in enzymatic processing, targeting, and the membrane insertion of nascent chains at the exit of the ribosomal tunnel. The polypeptide is Small ribosomal subunit protein uS8A (rps2201) (Schizosaccharomyces pombe (strain 972 / ATCC 24843) (Fission yeast)).